A 1893-amino-acid polypeptide reads, in one-letter code: Endoribonuclease Dicer (1893 aa).

The region spanning 41–217 (LLEAALDHNT…DLEEKIQKLE (177 aa)) is the Helicase ATP-binding domain. An ATP-binding site is contributed by 54–61 (LNSGSGKT). The DECH box motif lies at 165–168 (DECH). Positions 400–424 (VSWSDSEDDDDEDEEIEEKEKTETS) are disordered. The segment covering 404–416 (DSEDDDDEDEEIE) has biased composition (acidic residues). In terms of domain architecture, Helicase C-terminal spans 424 to 593 (SFPSPFTNIL…SIDCGNTESE (170 aa)). Residues 621–713 (AIGHINRYCA…MPVGKETVKY (93 aa)) enclose the Dicer dsRNA-binding fold domain. The interval 718-737 (DLHDEEETSVPGRPGSTKRR) is disordered. The PAZ domain occupies 886-1036 (KFVEDIEKSE…LVPELCAIHP (151 aa)). RNase III domains are found at residues 1249-1380 (TSDM…ETSG) and 1637-1795 (FENF…MDSG). Mg(2+)-binding residues include Glu-1293, Asp-1371, Glu-1374, Glu-1676, Asp-1781, and Glu-1784. Positions 1820–1885 (VPRSPVRELL…ARRALRSLKA (66 aa)) constitute a DRBM domain.

The protein belongs to the helicase family. Dicer subfamily. Component of the RISC loading complex (RLC), or micro-RNA (miRNA) loading complex (miRLC), which is composed of dicer1, ago2 and tarbp2; dicer1 and tarbp2 are required to process precursor miRNAs (pre-miRNAs) to mature miRNAs and then load them onto ago2. Note that the trimeric RLC/miRLC is also referred to as RISC. Mg(2+) serves as cofactor. Mn(2+) is required as a cofactor.

It localises to the cytoplasm. The enzyme catalyses Endonucleolytic cleavage to 5'-phosphomonoester.. In terms of biological role, double-stranded RNA (dsRNA) endoribonuclease playing a central role in short dsRNA-mediated post-transcriptional gene silencing. Cleaves naturally occurring long dsRNAs and short hairpin pre-microRNAs (miRNA) into fragments of twenty-one to twenty-three nucleotides with 3' overhang of two nucleotides, producing respectively short interfering RNAs (siRNA) and mature microRNAs. SiRNAs and miRNAs serve as guide to direct the RNA-induced silencing complex (RISC) to complementary RNAs to degrade them or prevent their translation. Gene silencing mediated by siRNAs, also called RNA interference, controls the elimination of transcripts from mobile and repetitive DNA elements of the genome but also the degradation of exogenous RNA of viral origin for instance. The miRNA pathway on the other side is a mean to specifically regulate the expression of target genes. The polypeptide is Endoribonuclease Dicer (dicer1) (Xenopus tropicalis (Western clawed frog)).